We begin with the raw amino-acid sequence, 409 residues long: Histidine--tRNA ligase (409 aa).

The protein belongs to the class-II aminoacyl-tRNA synthetase family. As to quaternary structure, homodimer.

The protein localises to the cytoplasm. The catalysed reaction is tRNA(His) + L-histidine + ATP = L-histidyl-tRNA(His) + AMP + diphosphate + H(+). The polypeptide is Histidine--tRNA ligase (Campylobacter fetus subsp. fetus (strain 82-40)).